Reading from the N-terminus, the 141-residue chain is NIDQSFPGFHGSEMWNPNTDLSEDCLYLNVWIPAPKPKNATVLIWIYGGGFQTGTSSLHVYDGKFLARVERVIVVSMNYRVGALGFLALPGNPEAPGNMGLFDQQLALQWVQKNIAAFGGNPKSVTLFGESAGAASVSLHL.

N-linked (GlcNAc...) asparagine glycosylation occurs at N39. 49-50 is a binding site for substrate; it reads GG. S131 serves as the catalytic Acyl-ester intermediate. S131 is modified (phosphoserine).

The protein belongs to the type-B carboxylesterase/lipase family. As to quaternary structure, homotetramer; disulfide-linked. Dimer of dimers. Present in most cells except erythrocytes.

Its subcellular location is the secreted. The catalysed reaction is an acylcholine + H2O = a carboxylate + choline + H(+). Esterase with broad substrate specificity. Contributes to the inactivation of the neurotransmitter acetylcholine. Can degrade neurotoxic organophosphate esters. In Macaca mulatta (Rhesus macaque), this protein is Cholinesterase (BCHE).